We begin with the raw amino-acid sequence, 130 residues long: Small ribosomal subunit protein uS9 (130 aa).

This sequence belongs to the universal ribosomal protein uS9 family.

This is Small ribosomal subunit protein uS9 from Nitrosospira multiformis (strain ATCC 25196 / NCIMB 11849 / C 71).